The chain runs to 55 residues: Methylmalonyl-CoA decarboxylase subunit epsilon (55 aa).

As to quaternary structure, the methylmalonyl-CoA decarboxylase is composed of five subunits: the carboxyltransferase alpha subunit (MmdA), the tunnel beta subunit (MmdB), the biotin-containing gamma subunit (MmdC), and the delta (MmdD) and epsilon (MmdE) subunits.

It is found in the cell membrane. It catalyses the reaction (S)-methylmalonyl-CoA + Na(+)(in) + H(+)(out) = propanoyl-CoA + Na(+)(out) + CO2. With respect to regulation, completely inhibited by avidin. Its function is as follows. Subunit of the sodium ion pump methylmalonyl-CoA decarboxylase, which converts the chemical energy of a decarboxylation reaction into an electrochemical gradient of Na(+) ions across the cytoplasmic membrane, thereby creating a sodium ion motive force that is used for ATP synthesis. The epsilon subunit seems not important for the catalysis of either decarboxylation or Na(+) transport, but it improves binding of the alpha subunit and plays an important role in stabilizing the methylmalonyl-CoA-decarboxylase enzyme complex. Can also convert malonyl-CoA into acetyl-CoA. This Veillonella parvula (Staphylococcus parvulus) protein is Methylmalonyl-CoA decarboxylase subunit epsilon.